Here is a 118-residue protein sequence, read N- to C-terminus: MARIAGINIPDQKHTVIALTSIYGIGKTRSQAICAAAGIAEHVKISELSEEQIDKLRDEVAKYVVEGDLRREVTLSIKRLMDLGTYRGLRHRRGLPVRGQRTKTNARTRKGPRKPIKK.

The segment at 91-118 (HRRGLPVRGQRTKTNARTRKGPRKPIKK) is disordered.

This sequence belongs to the universal ribosomal protein uS13 family. Part of the 30S ribosomal subunit. Forms a loose heterodimer with protein S19. Forms two bridges to the 50S subunit in the 70S ribosome.

Functionally, located at the top of the head of the 30S subunit, it contacts several helices of the 16S rRNA. In the 70S ribosome it contacts the 23S rRNA (bridge B1a) and protein L5 of the 50S subunit (bridge B1b), connecting the 2 subunits; these bridges are implicated in subunit movement. Contacts the tRNAs in the A and P-sites. The polypeptide is Small ribosomal subunit protein uS13 (Photorhabdus laumondii subsp. laumondii (strain DSM 15139 / CIP 105565 / TT01) (Photorhabdus luminescens subsp. laumondii)).